The chain runs to 129 residues: Cytochrome c oxidase subunit 5B, mitochondrial (129 aa).

The N-terminal 31 residues, 1–31 (MASRLLRGAGALAAQTLRARGPNGVAVVRSM), are a transit peptide targeting the mitochondrion. 2 positions are modified to N6-acetyllysine: Lys-68 and Lys-86. Residues Cys-91, Cys-93, Cys-113, and Cys-116 each coordinate Zn(2+). Position 121 is an N6-acetyllysine (Lys-121).

This sequence belongs to the cytochrome c oxidase subunit 5B family. Component of the cytochrome c oxidase (complex IV, CIV), a multisubunit enzyme composed of 14 subunits. The complex is composed of a catalytic core of 3 subunits MT-CO1, MT-CO2 and MT-CO3, encoded in the mitochondrial DNA, and 11 supernumerary subunits COX4I, COX5A, COX5B, COX6A, COX6B, COX6C, COX7A, COX7B, COX7C, COX8 and NDUFA4, which are encoded in the nuclear genome. The complex exists as a monomer or a dimer and forms supercomplexes (SCs) in the inner mitochondrial membrane with NADH-ubiquinone oxidoreductase (complex I, CI) and ubiquinol-cytochrome c oxidoreductase (cytochrome b-c1 complex, complex III, CIII), resulting in different assemblies (supercomplex SCI(1)III(2)IV(1) and megacomplex MCI(2)III(2)IV(2)).

Its subcellular location is the mitochondrion inner membrane. The protein operates within energy metabolism; oxidative phosphorylation. In terms of biological role, component of the cytochrome c oxidase, the last enzyme in the mitochondrial electron transport chain which drives oxidative phosphorylation. The respiratory chain contains 3 multisubunit complexes succinate dehydrogenase (complex II, CII), ubiquinol-cytochrome c oxidoreductase (cytochrome b-c1 complex, complex III, CIII) and cytochrome c oxidase (complex IV, CIV), that cooperate to transfer electrons derived from NADH and succinate to molecular oxygen, creating an electrochemical gradient over the inner membrane that drives transmembrane transport and the ATP synthase. Cytochrome c oxidase is the component of the respiratory chain that catalyzes the reduction of oxygen to water. Electrons originating from reduced cytochrome c in the intermembrane space (IMS) are transferred via the dinuclear copper A center (CU(A)) of subunit 2 and heme A of subunit 1 to the active site in subunit 1, a binuclear center (BNC) formed by heme A3 and copper B (CU(B)). The BNC reduces molecular oxygen to 2 water molecules using 4 electrons from cytochrome c in the IMS and 4 protons from the mitochondrial matrix. The protein is Cytochrome c oxidase subunit 5B, mitochondrial (COX5B) of Sus scrofa (Pig).